The sequence spans 1516 residues: UDP-glucose:glycoprotein glucosyltransferase 2 (1516 aa).

An N-terminal signal peptide occupies residues 1–27; the sequence is MAPAKATNVVRLLLGSTALWLSQLGSG. N-linked (GlcNAc...) asparagine glycans are attached at residues N256, N286, N920, and N950. The interval 1220 to 1516 is glucosyltransferase; the sequence is LHKENKKEKD…QDTILTHDEL (297 aa). Y1289 bears the Phosphotyrosine mark. A Prevents secretion from ER motif is present at residues 1513 to 1516; that stretch reads HDEL.

This sequence belongs to the glycosyltransferase 8 family. Interacts with METTL23. Interacts with SELENOF. The cofactor is Ca(2+). It depends on Mn(2+) as a cofactor. As to expression, higher levels in kidney, pancreas, heart, and skeletal muscle.

Its subcellular location is the endoplasmic reticulum lumen. The protein localises to the endoplasmic reticulum-Golgi intermediate compartment. The catalysed reaction is N(4)-(alpha-D-Man-(1-&gt;2)-alpha-D-Man-(1-&gt;2)-alpha-D-Man-(1-&gt;3)-[alpha-D-Man-(1-&gt;2)-alpha-D-Man-(1-&gt;3)-[alpha-D-Man-(1-&gt;2)-alpha-D-Man-(1-&gt;6)]-alpha-D-Man-(1-&gt;6)]-beta-D-Man-(1-&gt;4)-beta-D-GlcNAc-(1-&gt;4)-beta-D-GlcNAc)-L-asparaginyl-[protein] (N-glucan mannose isomer 9A1,2,3B1,2,3) + UDP-alpha-D-glucose = N(4)-(alpha-D-Glc-(1-&gt;3)-alpha-D-Man-(1-&gt;2)-alpha-D-Man-(1-&gt;2)-alpha-D-Man-(1-&gt;3)-[alpha-D-Man-(1-&gt;2)-alpha-D-Man-(1-&gt;3)-[alpha-D-Man-(1-&gt;2)-alpha-D-Man-(1-&gt;6)]-alpha-D-Man-(1-&gt;6)]-beta-D-Man-(1-&gt;4)-beta-D-GlcNAc-(1-&gt;4)-beta-D-GlcNAc)-L-asparaginyl-[protein] + UDP + H(+). It participates in protein modification; protein glycosylation. Its activity is regulated as follows. Ethylenediaminetetraacetic acid completely abolishes catalytic activity. Catalytic activity is enhanced by complex formation with SELENOF. In terms of biological role, recognizes glycoproteins with minor folding defects. Reglucosylates single N-glycans near the misfolded part of the protein, thus providing quality control for protein folding in the endoplasmic reticulum. Reglucosylated proteins are recognized by calreticulin for recycling to the endoplasmic reticulum and refolding or degradation. In Homo sapiens (Human), this protein is UDP-glucose:glycoprotein glucosyltransferase 2 (UGGT2).